Here is a 110-residue protein sequence, read N- to C-terminus: Endoribonuclease SymE (110 aa).

Residues 29–74 (SSYPEYTRIPAITLKGQWLEDAGFTTGTQVDVRVMNGCIVLTAQQP) form the SpoVT-AbrB domain.

It belongs to the SymE family.

Its subcellular location is the cytoplasm. Functionally, involved in the degradation and recycling of damaged RNA. It is itself a target for degradation by the ATP-dependent protease Lon. This is Endoribonuclease SymE from Salmonella choleraesuis (strain SC-B67).